Here is a 341-residue protein sequence, read N- to C-terminus: HTH-type transcriptional repressor PurR (341 aa).

The 55-residue stretch at 2–56 (ATIKDVAKHAGVSTTTVSHVINKTRFVAENTKAAVWAAIKELHYSPSAVARSLKV) folds into the HTH lacI-type domain. Residues 4–23 (IKDVAKHAGVSTTTVSHVIN) constitute a DNA-binding region (H-T-H motif). A DNA-binding region spans residues 48-56 (SAVARSLKV). Residues Tyr73, Arg190, Thr192, Phe221, and Asp275 each coordinate hypoxanthine.

As to quaternary structure, homodimer.

It functions in the pathway purine metabolism; purine nucleotide biosynthesis [regulation]. Functionally, is the main repressor of the genes involved in the de novo synthesis of purine nucleotides, regulating purB, purC, purEK, purF, purHD, purL, purMN and guaBA expression. PurR is allosterically activated to bind its cognate DNA by binding the purine corepressors, hypoxanthine or guanine, thereby effecting transcription repression. In Yersinia enterocolitica serotype O:8 / biotype 1B (strain NCTC 13174 / 8081), this protein is HTH-type transcriptional repressor PurR.